Reading from the N-terminus, the 976-residue chain is Protein phosphatase 1 regulatory subunit 12B (976 aa).

The segment covering 1–24 (MAELEHLGGKRAESARARRAEQLR) has biased composition (basic and acidic residues). The interval 1–52 (MAELEHLGGKRAESARARRAEQLRRWRGSLTEQEPAERQGAGRQLQTRRGSP) is disordered. Phosphoserine is present on S29. 5 ANK repeats span residues 57–86 (EDGAVFLAACSSGDTDEVKKLLARGADINT), 90–119 (DGLTALHQACIDENLDMVKFLVENRANVNQ), 123–152 (EGWTPLHAAASCGYLNIAEYFISHGASVGI), 216–245 (SGATALHVAAAKGYSEVLRLLIQAGYELNV), and 249–278 (DGWTPLHAAAHWGVKEACSILAEALCDMDI). The segment at 342–489 (EEIPKSQDTE…LDDKDKEREN (148 aa)) is disordered. A compositionally biased stretch (acidic residues) spans 362–374 (SEEEEGEDEVSES). A compositionally biased stretch (basic and acidic residues) spans 375–385 (ETEKEADKKPE). Residues 411–423 (FSASSARRLSSLF) show a composition bias toward low complexity. Phosphothreonine is present on T444. Residues 465 to 477 (SSIYRSSSSPRIS) show a composition bias toward low complexity. A compositionally biased stretch (basic and acidic residues) spans 480–489 (LDDKDKEREN). S502 is subject to Phosphoserine. Residues 503–873 (STSDIEEKEN…LTSRVEEDSN (371 aa)) are disordered. Positions 538–564 (ETPQTIAPSTYTSTYLKRTPYKSQADS) are enriched in polar residues. Basic and acidic residues predominate over residues 622 to 631 (VRDEEAESLR). A compositionally biased stretch (basic residues) spans 632-642 (KARSRQARQTR). T645 is subject to Phosphothreonine. The segment covering 655 to 679 (EAEKTFSRSRAERQAQEQPGEKLED) has biased composition (basic and acidic residues). Composition is skewed to polar residues over residues 722 to 739 (DKPTTPVSPSASRPSLYT) and 747 to 763 (SRASGPDSENSETSTHA). Positions 765 to 777 (AAKEMDTSEKGEA) are enriched in basic and acidic residues. Residues 791 to 801 (ERRRAKDRRRG) show a composition bias toward basic residues. The residue at position 802 (T802) is a Phosphothreonine. Over residues 818-830 (EEVKEALHERLSR) the composition is skewed to basic and acidic residues. S833 is subject to Phosphoserine. Residues 844-860 (YSDRASARARREAREAR) are compositionally biased toward basic and acidic residues. Position 941 is a phosphoserine (S941).

As to quaternary structure, PP1 comprises a catalytic subunit, PPP1CA, PPP1CB or PPP1CC, and one or several targeting or regulatory subunits. PPP1R12B mediates binding to myosin. Isoform 3 and isoform 4 bind PPP1R12A, but not isoform 1 of PPP1R12B itself. Binds IL16.

Its subcellular location is the cytoplasm. It localises to the cytoskeleton. It is found in the stress fiber. Functionally, regulates myosin phosphatase activity. Augments Ca(2+) sensitivity of the contractile apparatus. The polypeptide is Protein phosphatase 1 regulatory subunit 12B (Ppp1r12b) (Mus musculus (Mouse)).